We begin with the raw amino-acid sequence, 633 residues long: 1-deoxy-D-xylulose-5-phosphate synthase (633 aa).

Polar residues predominate over residues 1 to 12; it reads MSEPTANLQPAS. Residues 1–21 are disordered; the sequence is MSEPTANLQPASRTPLLDRVN. Residues His86 and 127–129 contribute to the thiamine diphosphate site; that span reads GHA. Asp158 is a Mg(2+) binding site. Residues 159-160, Asn187, and Glu377 contribute to the thiamine diphosphate site; that span reads GS. Residue Asn187 coordinates Mg(2+).

It belongs to the transketolase family. DXPS subfamily. In terms of assembly, homodimer. Mg(2+) serves as cofactor. It depends on thiamine diphosphate as a cofactor.

It carries out the reaction D-glyceraldehyde 3-phosphate + pyruvate + H(+) = 1-deoxy-D-xylulose 5-phosphate + CO2. Its pathway is metabolic intermediate biosynthesis; 1-deoxy-D-xylulose 5-phosphate biosynthesis; 1-deoxy-D-xylulose 5-phosphate from D-glyceraldehyde 3-phosphate and pyruvate: step 1/1. In terms of biological role, catalyzes the acyloin condensation reaction between C atoms 2 and 3 of pyruvate and glyceraldehyde 3-phosphate to yield 1-deoxy-D-xylulose-5-phosphate (DXP). This chain is 1-deoxy-D-xylulose-5-phosphate synthase, found in Deinococcus geothermalis (strain DSM 11300 / CIP 105573 / AG-3a).